The primary structure comprises 371 residues: Alginate lyase (371 aa).

An N-terminal signal peptide occupies residues 1–26 (MQSTDLKRLLIPSLLGLAIVTGSAQA). Substrate-binding positions include 67–68 (SK), 140–141 (HT), and Y258.

It belongs to the polysaccharide lyase 5 family.

Its subcellular location is the periplasm. The enzyme catalyses Eliminative cleavage of alginate to give oligosaccharides with 4-deoxy-alpha-L-erythro-hex-4-enuronosyl groups at their non-reducing ends and beta-D-mannuronate at their reducing end.. Its function is as follows. Catalyzes the depolymerization of alginate by cleaving the beta-1,4 glycosidic bond between two adjacent sugar residues via a beta-elimination mechanism. May serve to degrade mislocalized alginate that is trapped in the periplasmic space. In Pseudomonas fluorescens (strain ATCC BAA-477 / NRRL B-23932 / Pf-5), this protein is Alginate lyase.